We begin with the raw amino-acid sequence, 495 residues long: MRINPTTSGSTVPTLEEKNLGRIAQIIGPVLDVVFPPGKMPNIYNALVVKGRDTVGQQINVTCEVQQLLGNNRVRAVAMSATDGLTRGMEVIDTGAALSVPVGGATLGRIFNVLGEPVDNLGPVDTRTTSPIHRSAPAFIQLDTKLSIFETGIKVVDLLAPYRRGGKIGLFGGAGVGKTVLIMELINNIAKAHGGVSVFGGVGERTREGNDLYMEMKESGVINEKNIAESKVALVYGQMNEPPGARMRVGLTALTMAEYFRDVNEQDVLLFIDNIFRFVQAGSEVSALLGRMPSAVGYQPTLSTEMGSLQERITSTKEGSITSIQAVYVPADDLTDPAPATTFAHLDATTVLSRGLSAKGIYPAVDPLDSTSTMLQPRIVGEEHYETAQRVKQTLQRYKELQDIIAILGLDELSEEDRLTVARARKIERFLSQPFFVAEVFTGSPGKYVGLAETIRGFQLILSGELDGLPEQAFYLVGNIDEATAKAMNLEGEKK.

172-179 serves as a coordination point for ATP; the sequence is GGAGVGKT.

This sequence belongs to the ATPase alpha/beta chains family. In terms of assembly, F-type ATPases have 2 components, CF(1) - the catalytic core - and CF(0) - the membrane proton channel. CF(1) has five subunits: alpha(3), beta(3), gamma(1), delta(1), epsilon(1). CF(0) has four main subunits: a(1), b(1), b'(1) and c(9-12).

The protein localises to the plastid. The protein resides in the chloroplast thylakoid membrane. The catalysed reaction is ATP + H2O + 4 H(+)(in) = ADP + phosphate + 5 H(+)(out). Functionally, produces ATP from ADP in the presence of a proton gradient across the membrane. The catalytic sites are hosted primarily by the beta subunits. The polypeptide is ATP synthase subunit beta, chloroplastic (Scilla siberica (Siberian squill)).